We begin with the raw amino-acid sequence, 655 residues long: A-type voltage-gated potassium channel KCND3 (655 aa).

At 1-182 the chain is on the cytoplasmic side; sequence MAAGVAAWLP…FENPHTSTLA (182 aa). An interaction with KCNIP1 and KCNIP2 region spans residues 6-21; that stretch reads AAWLPFARAAAIGWMP. An interaction with KCNIP1 region spans residues 70–78; that stretch reads EKEFFFNED. Zn(2+)-binding residues include histidine 104, cysteine 110, cysteine 131, and cysteine 132. The residue at position 153 (serine 153) is a Phosphoserine. The helical transmembrane segment at 183-204 threads the bilayer; sequence LVFYYVTGFFIAVSVITNVVET. At 205–223 the chain is on the extracellular side; that stretch reads VPCGTVPGSKELPCGERYS. The helical transmembrane segment at 224–246 threads the bilayer; it reads VAFFCLDTACVMIFTVEYLLRLF. Over 247 to 253 the chain is Cytoplasmic; that stretch reads AAPSRYR. The chain crosses the membrane as a helical span at residues 254 to 277; the sequence is FIRSVMSIIDVVAIMPYYIGLVMT. At 278–283 the chain is on the extracellular side; it reads NNEDVS. A helical; Voltage-sensor transmembrane segment spans residues 284 to 306; sequence GAFVTLRVFRVFRIFKFSRHSQG. The Cytoplasmic portion of the chain corresponds to 307 to 318; sequence LRILGYTLKSCA. The helical transmembrane segment at 319–343 threads the bilayer; the sequence is SELGFLLFSLTMAIIIFATVMFYAE. The Extracellular portion of the chain corresponds to 344–352; sequence KGSSASKFT. Residues 353-366 constitute an intramembrane region (helical); the sequence is SIPASFWYTIVTMT. Threonine 367, leucine 368, glycine 369, and tyrosine 370 together coordinate K(+). The Selectivity filter signature appears at 367–372; the sequence is TLGYGD. An intramembrane segment occupies 367–374; it reads TLGYGDMV. The chain crosses the membrane as a helical span at residues 378–400; the sequence is IAGKIFGSICSLSGVLVIALPVP. Residues 401-655 are Cytoplasmic-facing; it reads VIVSNFSRIY…TSNVVKVSAL (255 aa). Threonine 459 bears the Phosphothreonine mark. Residues 470-487 are interaction with KCNIP1 and KCNIP2; sequence SLIESQHHHLLHCLEKTT. The interval 472–487 is mediates dendritic targeting; that stretch reads IESQHHHLLHCLEKTT. Positions 523–565 are disordered; sequence SSMQNYPSTRSPSLSSHSGLTTTCCSRRSKKTTHLPNSNLPAT. Residues 529-548 are compositionally biased toward low complexity; sequence PSTRSPSLSSHSGLTTTCCS. Phosphoserine occurs at positions 569 and 585. The disordered stretch occupies residues 615-655; the sequence is ISIPTPPALTPEGESRPPPASPGPNTNIPSITSNVVKVSAL. Residues 637 to 655 show a composition bias toward polar residues; it reads GPNTNIPSITSNVVKVSAL.

It belongs to the potassium channel family. D (Shal) (TC 1.A.1.2) subfamily. Kv4.3/KCND3 sub-subfamily. As to quaternary structure, homotetramer. Heterotetramer with KCND2. Associates with the regulatory subunit KCNIP3. Associates with the regulatory subunit KCNIP4. Interacts with KCNE1, KCNE2, SCN1B and KCNAB1 and DLG1. Component of heteromultimeric potassium channels. Identified in potassium channel complexes containing KCND1, KCND2, KCND3, KCNIP1, KCNIP2, KCNIP3, KCNIP4, DPP6 and DPP10. Interacts with KCNIP1; each KCNIP1 monomer interacts with two adjacent KCND3 subunits, through both the N-terminal inactivation ball of a KCND3 subunit and a C-terminal helix from the adjacent KCND3 subunit, clamping them together; this interaction stabilizes the tetrameric form and modulates the channel gating kinetics namely channel activation and inactivation kinetics and rate of recovery from inactivation. Interacts with DPP6; this interaction modulates the channel gating kinetics namely channel activation and inactivation kinetics and rate of recovery from inactivation. Interacts with KCNIP2; each KCNIP2 monomer interacts with two adjacent KCND3 subunits, through both the N-terminal inactivation ball of a KCND3 subunit and a C-terminal helix from the adjacent KCND3 subunit, clamping them together; this interaction modulates the channel gating kinetics. In terms of processing, regulated through phosphorylation at Ser-569 by CaMK2D.

The protein resides in the cell membrane. Its subcellular location is the sarcolemma. It is found in the cell projection. It localises to the dendrite. The enzyme catalyses K(+)(in) = K(+)(out). Pore-forming (alpha) subunit of voltage-gated A-type potassium channels that mediates transmembrane potassium transport in excitable membranes, in brain and heart. In cardiomyocytes, may generate the transient outward potassium current I(To). In neurons, may conduct the transient subthreshold somatodendritic A-type potassium current (ISA). Kinetics properties are characterized by fast activation at subthreshold membrane potentials, rapid inactivation, and quick recovery from inactivation. Channel properties are modulated by interactions with regulatory subunits. Interaction with the regulatory subunits KCNIP1 or KCNIP2 modulates the channel gating kinetics namely channel activation and inactivation kinetics and rate of recovery from inactivation. Likewise, interaction with DPP6 modulates the channel gating kinetics namely channel activation and inactivation kinetics. In Mus musculus (Mouse), this protein is A-type voltage-gated potassium channel KCND3.